Here is a 372-residue protein sequence, read N- to C-terminus: MFNFEISAHCPHTKGRCGCFHTPHGPVQTPRFMPVGTLATVKGISTEQLARTGAQMVLSNTYHLHLQPGEQVVAEAGGLHRFMGWDGPMLTDSGGFQVFSLGNLNKIDERGVVFRNPRDGRTIDMTPEHATNIQMALGADVAMAFDQCPPYPATENDVKDACRRTHAWLERCVNAHTRSDQALFGIVQGGCFPHLRRESARAVAAFDLPGIAIGGVSVGEPTDDMHRIVRDIGPLLPLDRPRYLMGIGTLREMAVAVANGIDLFDCVLPTRLGRHGTALVGGERWNLRNARFRNDHTPLDSSCSCLACTGHSRAYIHHLIRSDELLGLTLLSLHNITHLVRFTNAMAQAIQDGCFSEDFAPWQEDSPAHHTW.

The Proton acceptor role is filled by Asp92. Substrate contacts are provided by residues 92-96, Asp146, Gln188, and Gly215; that span reads DSGGF. An RNA binding region spans residues 246-252; it reads GIGTLRE. The active-site Nucleophile is the Asp265. Residues 270-274 are RNA binding; important for wobble base 34 recognition; that stretch reads TRLGR. Cys303, Cys305, Cys308, and His334 together coordinate Zn(2+).

Belongs to the queuine tRNA-ribosyltransferase family. As to quaternary structure, homodimer. Within each dimer, one monomer is responsible for RNA recognition and catalysis, while the other monomer binds to the replacement base PreQ1. Zn(2+) is required as a cofactor.

The catalysed reaction is 7-aminomethyl-7-carbaguanine + guanosine(34) in tRNA = 7-aminomethyl-7-carbaguanosine(34) in tRNA + guanine. The protein operates within tRNA modification; tRNA-queuosine biosynthesis. In terms of biological role, catalyzes the base-exchange of a guanine (G) residue with the queuine precursor 7-aminomethyl-7-deazaguanine (PreQ1) at position 34 (anticodon wobble position) in tRNAs with GU(N) anticodons (tRNA-Asp, -Asn, -His and -Tyr). Catalysis occurs through a double-displacement mechanism. The nucleophile active site attacks the C1' of nucleotide 34 to detach the guanine base from the RNA, forming a covalent enzyme-RNA intermediate. The proton acceptor active site deprotonates the incoming PreQ1, allowing a nucleophilic attack on the C1' of the ribose to form the product. After dissociation, two additional enzymatic reactions on the tRNA convert PreQ1 to queuine (Q), resulting in the hypermodified nucleoside queuosine (7-(((4,5-cis-dihydroxy-2-cyclopenten-1-yl)amino)methyl)-7-deazaguanosine). In Synechococcus sp. (strain CC9902), this protein is Queuine tRNA-ribosyltransferase.